Consider the following 681-residue polypeptide: Pentatricopeptide repeat-containing protein At2g22410, mitochondrial (681 aa).

A mitochondrion-targeting transit peptide spans 1–32 (MNISKAKLLLLPPPLTPKLNRSLYSHSQRRTR). PPR repeat units follow at residues 117–151 (NIFS…GCCE), 155–189 (DHFT…RLEL), 190–220 (VSHV…SPVR), 221–255 (DLVS…GVKP), 256–290 (DDVT…GLRM), 291–321 (TIPL…LEKR), 322–356 (TIVS…DVVL), 357–387 (WNAM…NTKP), 388–422 (DEIT…SLSL), 423–453 (NVAL…IQTR), 454–488 (NSLT…GIAP), 489–519 (DEIT…MKSR), and 525–555 (QLKH…MPME). The interval 560 to 635 (VWGALLFGCR…IPGCSSIEVN (76 aa)) is type E motif. Positions 636–666 (GIVCEFIVRDKSRPESEKIYDRLHCLGRHMR) are type E(+) motif.

This sequence belongs to the PPR family. PCMP-E subfamily.

It localises to the mitochondrion. In Arabidopsis thaliana (Mouse-ear cress), this protein is Pentatricopeptide repeat-containing protein At2g22410, mitochondrial (PCMP-E28).